Consider the following 396-residue polypeptide: Elongation factor Tu (396 aa).

One can recognise a tr-type G domain in the interval 10 to 206 (KPHVNIGTIG…AVDAYIPEPE (197 aa)). The segment at 19–26 (GHVDHGKT) is G1. GTP is bound at residue 19-26 (GHVDHGKT). A Mg(2+)-binding site is contributed by Thr26. A G2 region spans residues 60-64 (GITIA). The tract at residues 81–84 (DCPG) is G3. GTP-binding positions include 81 to 85 (DCPGH) and 136 to 139 (NKAD). Positions 136–139 (NKAD) are G4. Positions 174-176 (SAL) are G5.

It belongs to the TRAFAC class translation factor GTPase superfamily. Classic translation factor GTPase family. EF-Tu/EF-1A subfamily. Monomer.

It is found in the cytoplasm. The enzyme catalyses GTP + H2O = GDP + phosphate + H(+). In terms of biological role, GTP hydrolase that promotes the GTP-dependent binding of aminoacyl-tRNA to the A-site of ribosomes during protein biosynthesis. This is Elongation factor Tu from Geobacter metallireducens (strain ATCC 53774 / DSM 7210 / GS-15).